Reading from the N-terminus, the 501-residue chain is uncharacterized protein (501 aa).

The chain crosses the membrane as a helical span at residues 26-46 (ILLLLLGLIVLVNIGINVATM). 2 disordered regions span residues 316 to 384 (RGTE…VRRR) and 409 to 501 (EASH…EKLN). Over residues 476-490 (RSSSLPPASTSTLRP) the composition is skewed to low complexity.

Its subcellular location is the membrane. This is an uncharacterized protein from Homo sapiens (Human).